The chain runs to 156 residues: Probable chemoreceptor glutamine deamidase CheD (156 aa).

It belongs to the CheD family.

It catalyses the reaction L-glutaminyl-[protein] + H2O = L-glutamyl-[protein] + NH4(+). Probably deamidates glutamine residues to glutamate on methyl-accepting chemotaxis receptors (MCPs), playing an important role in chemotaxis. The chain is Probable chemoreceptor glutamine deamidase CheD from Bdellovibrio bacteriovorus (strain ATCC 15356 / DSM 50701 / NCIMB 9529 / HD100).